The chain runs to 86 residues: Protein Tat (86 aa).

The interaction with human CREBBP stretch occupies residues 1–24 (MEPVDPRLEPWKHPGSQPKTACTN). The interval 1-48 (MEPVDPRLEPWKHPGSQPKTACTNCYCKKCCFHCQVCFITKALGISYG) is transactivation. The Zn(2+) site is built by Cys22, Cys25, and Cys27. The interval 22-37 (CTNCYCKKCCFHCQVC) is cysteine-rich. N6-acetyllysine; by host PCAF is present on Lys28. Zn(2+)-binding residues include Cys30, His33, Cys34, and Cys37. The core stretch occupies residues 38 to 48 (FITKALGISYG). The span at 48–58 (GRKKRRQRRRP) shows a compositional bias: basic residues. Positions 48-86 (GRKKRRQRRRPPQGSQTHQVSLSKQPTSQSRGDPTGPKE) are disordered. The short motif at 49–57 (RKKRRQRRR) is the Nuclear localization signal, RNA-binding (TAR), and protein transduction element. The tract at residues 49 to 86 (RKKRRQRRRPPQGSQTHQVSLSKQPTSQSRGDPTGPKE) is interaction with the host capping enzyme RNGTT. Residues Lys50 and Lys51 each carry the N6-acetyllysine; by host EP300 and GCN5L2 modification. Arg52 and Arg53 each carry asymmetric dimethylarginine; by host PRMT6. Polar residues predominate over residues 62–79 (SQTHQVSLSKQPTSQSRG). Lys71 participates in a covalent cross-link: Glycyl lysine isopeptide (Lys-Gly) (interchain with G-Cter in ubiquitin). Residues 78-80 (RGD) carry the Cell attachment site motif.

This sequence belongs to the lentiviruses Tat family. In terms of assembly, interacts with host CCNT1. Associates with the P-TEFb complex composed at least of Tat, P-TEFb (CDK9 and CCNT1), TAR RNA, RNA Pol II. Recruits the HATs CREBBP, TAF1/TFIID, EP300, PCAF and GCN5L2. Interacts with host KAT5/Tip60; this interaction targets the latter to degradation. Interacts with the host deacetylase SIRT1. Interacts with host capping enzyme RNGTT; this interaction stimulates RNGTT. Binds to host KDR, and to the host integrins ITGAV/ITGB3 and ITGA5/ITGB1. Interacts with host KPNB1/importin beta-1 without previous binding to KPNA1/importin alpha-1. Interacts with EIF2AK2. Interacts with host nucleosome assembly protein NAP1L1; this interaction may be required for the transport of Tat within the nucleus, since the two proteins interact at the nuclear rim. Interacts with host C1QBP/SF2P32; this interaction involves lysine-acetylated Tat. Interacts with the host chemokine receptors CCR2, CCR3 and CXCR4. Interacts with host DPP4/CD26; this interaction may trigger an anti-proliferative effect. Interacts with host LDLR. Interacts with the host extracellular matrix metalloproteinase MMP1. Interacts with host PRMT6; this interaction mediates Tat's methylation. Interacts with, and is ubiquitinated by MDM2/Hdm2. Interacts with host PSMC3 and HTATIP2. Interacts with STAB1; this interaction may overcome SATB1-mediated repression of IL2 and IL2RA (interleukin) in T cells by binding to the same domain than HDAC1. Interacts (when acetylated) with human CDK13, thereby increasing HIV-1 mRNA splicing and promoting the production of the doubly spliced HIV-1 protein Nef. Interacts with host TBP; this interaction modulates the activity of transcriptional pre-initiation complex. Interacts with host RELA. Interacts with host PLSCR1; this interaction negatively regulates Tat transactivation activity by altering its subcellular distribution. Asymmetrical arginine methylation by host PRMT6 seems to diminish the transactivation capacity of Tat and affects the interaction with host CCNT1. In terms of processing, acetylation by EP300, CREBBP, GCN5L2/GCN5 and PCAF regulates the transactivation activity of Tat. EP300-mediated acetylation of Lys-50 promotes dissociation of Tat from the TAR RNA through the competitive binding to PCAF's bromodomain. In addition, the non-acetylated Tat's N-terminus can also interact with PCAF. PCAF-mediated acetylation of Lys-28 enhances Tat's binding to CCNT1. Lys-50 is deacetylated by SIRT1. Post-translationally, polyubiquitination by host MDM2 does not target Tat to degradation, but activates its transactivation function and fosters interaction with CCNT1 and TAR RNA. Phosphorylated by EIF2AK2 on serine and threonine residues adjacent to the basic region important for TAR RNA binding and function. Phosphorylation of Tat by EIF2AK2 is dependent on the prior activation of EIF2AK2 by dsRNA.

The protein resides in the host nucleus. The protein localises to the host nucleolus. Its subcellular location is the host cytoplasm. It localises to the secreted. In terms of biological role, transcriptional activator that increases RNA Pol II processivity, thereby increasing the level of full-length viral transcripts. Recognizes a hairpin structure at the 5'-LTR of the nascent viral mRNAs referred to as the transactivation responsive RNA element (TAR) and recruits the cyclin T1-CDK9 complex (P-TEFb complex) that will in turn hyperphosphorylate the RNA polymerase II to allow efficient elongation. The CDK9 component of P-TEFb and other Tat-activated kinases hyperphosphorylate the C-terminus of RNA Pol II that becomes stabilized and much more processive. Other factors such as HTATSF1/Tat-SF1, SUPT5H/SPT5, and HTATIP2 are also important for Tat's function. Besides its effect on RNA Pol II processivity, Tat induces chromatin remodeling of proviral genes by recruiting the histone acetyltransferases (HATs) CREBBP, EP300 and PCAF to the chromatin. This also contributes to the increase in proviral transcription rate, especially when the provirus integrates in transcriptionally silent region of the host genome. To ensure maximal activation of the LTR, Tat mediates nuclear translocation of NF-kappa-B by interacting with host RELA. Through its interaction with host TBP, Tat may also modulate transcription initiation. Tat can reactivate a latently infected cell by penetrating in it and transactivating its LTR promoter. In the cytoplasm, Tat is thought to act as a translational activator of HIV-1 mRNAs. Extracellular circulating Tat can be endocytosed by surrounding uninfected cells via the binding to several surface receptors such as CD26, CXCR4, heparan sulfate proteoglycans (HSPG) or LDLR. Neurons are rarely infected, but they internalize Tat via their LDLR. Through its interaction with nuclear HATs, Tat is potentially able to control the acetylation-dependent cellular gene expression. Modulates the expression of many cellular genes involved in cell survival, proliferation or in coding for cytokines or cytokine receptors. Tat plays a role in T-cell and neurons apoptosis. Tat induced neurotoxicity and apoptosis probably contribute to neuroAIDS. Circulating Tat also acts as a chemokine-like and/or growth factor-like molecule that binds to specific receptors on the surface of the cells, affecting many cellular pathways. In the vascular system, Tat binds to ITGAV/ITGB3 and ITGA5/ITGB1 integrins dimers at the surface of endothelial cells and competes with bFGF for heparin-binding sites, leading to an excess of soluble bFGF. This Homo sapiens (Human) protein is Protein Tat.